A 400-amino-acid chain; its full sequence is Large envelope protein (400 aa).

Met1 carries the post-translational modification N-acetylmethionine. A lipid anchor (N-myristoyl glycine; by host) is attached at Gly2. The segment at 2-119 (GGWSSKHRKG…PPLRDTHPQA (118 aa)) is pre-S1. The segment at 2-174 (GGWSSKHRKG…FTKTGDPASN (173 aa)) is pre-S. Topologically, residues 2-181 (GGWSSKHRKG…ASNMESTTSG (180 aa)) are virion surface; in external conformation. Over 2–253 (GGWSSKHRKG…PGYRWMCLRR (252 aa)) the chain is Intravirion; in internal conformation. N-linked (GlcNAc...) asparagine glycosylation occurs at Trp4. Residues 89 to 117 (PAAPPPASTNRQSGRQPTPISPPLRDTHP) form a disordered region. Positions 96-106 (STNRQSGRQPT) are enriched in polar residues. The tract at residues 120-174 (MQWNSTAFHQALQDPRVRGLYFPAGGSSSGTVNPVPNTVSHISSIFTKTGDPASN) is pre-S2. The helical transmembrane segment at 182 to 202 (FLGPLLVLQAGFFLLTRILTI) threads the bilayer. The Intravirion; in external conformation segment spans residues 203 to 253 (PQSLDSWWTSLNFLGGAPGCIGQNSQSQTSNHSPTSCPPTCPGYRWMCLRR). Residues 254-274 (FIIFLFILLLCLIFLLVLLDY) traverse the membrane as a helical segment. Residues 275–348 (QGMLPVCPLL…WASVRFSWLS (74 aa)) are Virion surface-facing. N-linked (GlcNAc...) asparagine; by host glycosylation occurs at Asn320. The chain crosses the membrane as a helical span at residues 349–369 (LLVPFVQWFAGLSPTVWLSVI). The Intravirion segment spans residues 370-375 (WMIWYW). Residues 376–398 (GPSLYNILSPFLPLLPIFLCLWV) form a helical membrane-spanning segment. Topologically, residues 399-400 (YI) are virion surface.

The protein belongs to the orthohepadnavirus major surface antigen family. In terms of assembly, in its internal form (Li-HBsAg), interacts with the capsid protein and with the isoform S. Interacts with host chaperone CANX. As to quaternary structure, associates with host chaperone CANX through its pre-S2 N glycan; this association may be essential for isoform M proper secretion. Interacts with isoform L. Interacts with the antigens of satellite virus HDV (HDVAgs); this interaction is required for encapsidation of HDV genomic RNA. In terms of processing, isoform M is N-terminally acetylated by host at a ratio of 90%, and N-glycosylated by host at the pre-S2 region. Post-translationally, myristoylated.

Its subcellular location is the virion membrane. In terms of biological role, the large envelope protein exists in two topological conformations, one which is termed 'external' or Le-HBsAg and the other 'internal' or Li-HBsAg. In its external conformation the protein attaches the virus to cell receptors and thereby initiating infection. This interaction determines the species specificity and liver tropism. This attachment induces virion internalization predominantly through caveolin-mediated endocytosis. The large envelope protein also assures fusion between virion membrane and endosomal membrane. In its internal conformation the protein plays a role in virion morphogenesis and mediates the contact with the nucleocapsid like a matrix protein. Functionally, the middle envelope protein plays an important role in the budding of the virion. It is involved in the induction of budding in a nucleocapsid independent way. In this process the majority of envelope proteins bud to form subviral lipoprotein particles of 22 nm of diameter that do not contain a nucleocapsid. This is Large envelope protein from Homo sapiens (Human).